The primary structure comprises 189 residues: Chitin synthase 3 (189 aa).

The protein belongs to the chitin synthase family. Class II subfamily.

It is found in the cell membrane. It catalyses the reaction [(1-&gt;4)-N-acetyl-beta-D-glucosaminyl](n) + UDP-N-acetyl-alpha-D-glucosamine = [(1-&gt;4)-N-acetyl-beta-D-glucosaminyl](n+1) + UDP + H(+). Functionally, polymerizes chitin, a structural polymer of the cell wall and septum, by transferring the sugar moiety of UDP-GlcNAc to the non-reducing end of the growing chitin polymer. The chain is Chitin synthase 3 (CHS3) from Ajellomyces capsulatus (Darling's disease fungus).